A 155-amino-acid polypeptide reads, in one-letter code: Cell division protein SepF (155 aa).

The span at 16–35 shows a compositional bias: acidic residues; it reads TEDEEEDVETVEESEDVEEE. Positions 16–44 are disordered; the sequence is TEDEEEDVETVEESEDVEEEESKKPQFIQ.

It belongs to the SepF family. In terms of assembly, homodimer. Interacts with FtsZ.

The protein localises to the cytoplasm. Cell division protein that is part of the divisome complex and is recruited early to the Z-ring. Probably stimulates Z-ring formation, perhaps through the cross-linking of FtsZ protofilaments. Its function overlaps with FtsA. The sequence is that of Cell division protein SepF from Acetivibrio thermocellus (strain ATCC 27405 / DSM 1237 / JCM 9322 / NBRC 103400 / NCIMB 10682 / NRRL B-4536 / VPI 7372) (Clostridium thermocellum).